The primary structure comprises 396 residues: uncharacterized protein (396 aa).

This is an uncharacterized protein from Psittacid herpesvirus 1 (isolate Amazon parrot/-/97-0001/1997) (PsHV-1).